A 431-amino-acid polypeptide reads, in one-letter code: MTEFTNFFTKNNIEIKNKKFLLAASGGPDSVALFHMLVNFLPNPSKQLIVAHLDHCLRKDSYLESELLQKLTTAFKIKLIEKSWPVALHPQTGIEAKAREFRYAFLAHTGKKYQVDYLLTAHHGDDLIENILLKFIRSGDVAEMNSLQIVGNLDSMRLLRPLIKYSKDQLLEYDKRNGLDYIEDETNFEDDTLRNRLRHYVVPLLKKETNHLVENAYRFSESAALLSDCQNSFFESLILPIDFGKALRGKKSDLINLNENQLAAFFDYLVYKKWHQRVHFDEIRRRKKATFNKENFQLIFYQDYYYLINRNGLTPIDSKKKKIKLDEKFSLNGKEYLISHDKKIGNLVGYFYGVRTDFLEVGSLPQGSKLRLADGRQTKAKKKFAENGIPLILRPYCLTIWQKENPVYVENVYQNQEYNANFVRYNVYIYL.

25-30 is a binding site for ATP; that stretch reads SGGPDS.

The protein belongs to the tRNA(Ile)-lysidine synthase family.

It is found in the cytoplasm. The catalysed reaction is cytidine(34) in tRNA(Ile2) + L-lysine + ATP = lysidine(34) in tRNA(Ile2) + AMP + diphosphate + H(+). Ligates lysine onto the cytidine present at position 34 of the AUA codon-specific tRNA(Ile) that contains the anticodon CAU, in an ATP-dependent manner. Cytidine is converted to lysidine, thus changing the amino acid specificity of the tRNA from methionine to isoleucine. This chain is tRNA(Ile)-lysidine synthase, found in Lactobacillus gasseri (strain ATCC 33323 / DSM 20243 / BCRC 14619 / CIP 102991 / JCM 1131 / KCTC 3163 / NCIMB 11718 / NCTC 13722 / AM63).